The sequence spans 22 residues: Hemocyanin subunit 4 (22 aa).

The protein belongs to the tyrosinase family. Hemocyanin subfamily. As to expression, hemolymph.

Its subcellular location is the secreted. The protein localises to the extracellular space. Hemocyanins are copper-containing oxygen carriers occurring freely dissolved in the hemolymph of many mollusks and arthropods. The chain is Hemocyanin subunit 4 from Homarus americanus (American lobster).